Consider the following 754-residue polypeptide: Nibrin (754 aa).

In terms of domain architecture, FHA spans 24–83 (YVVGRKNCAILIEKDQSISRNHAVLTANFSVTNLSQTDEIPVLALKDNSKYGTFVNEEKM). BRCT domains follow at residues 105–181 (KFRI…TEFL) and 224–315 (GKTF…LAVI). The tract at residues 111-328 (EPLVACSSCL…TKNYCDPQGH (218 aa)) is mediates interaction with SP100. Residues 221-402 (IFKGKTFIFL…FRMLSQDAPT (182 aa)) form an interaction with MTOR, MAPKAP1 and RICTOR region. At Ser-278 the chain carries Phosphoserine; by ATM. Residues 326-346 (QGHPSTGLKTTTPGPSLSQGL) form a disordered region. The span at 328–346 (HPSTGLKTTTPGPSLSQGL) shows a compositional bias: polar residues. Thr-337 carries the post-translational modification Phosphothreonine. Ser-343 carries the post-translational modification Phosphoserine; by ATM. Position 347 is a phosphoserine (Ser-347). At Lys-388 the chain carries N6-lactoyllysine. 2 disordered regions span residues 396–415 (LSQD…NNNS) and 431–475 (LSPT…NQEM). Ser-397 bears the Phosphoserine mark. Thr-402 carries the post-translational modification Phosphothreonine. Composition is skewed to polar residues over residues 431 to 440 (LSPTKLPSIN) and 447 to 462 (SQQQ…FQPS). Ser-432 is modified (phosphoserine). Lys-435 participates in a covalent cross-link: Glycyl lysine isopeptide (Lys-Gly) (interchain with G-Cter in ubiquitin). The Nuclear localization signal signature appears at 461–467 (PSTKKRE). 2 positions are modified to phosphoserine: Ser-509 and Ser-518. Glycyl lysine isopeptide (Lys-Gly) (interchain with G-Cter in SUMO2) cross-links involve residues Lys-571 and Lys-582. Phosphoserine is present on residues Ser-615 and Ser-673. Residues Lys-686, Lys-690, and Lys-735 each participate in a glycyl lysine isopeptide (Lys-Gly) (interchain with G-Cter in ubiquitin) cross-link. The FxF/Y motif motif lies at 740–749 (ADDLFRYNPY).

The protein belongs to the Nibrin family. In terms of assembly, component of the MRN complex composed of two heterodimers RAD50 and MRE11 associated with a single NBN. The MRN complexes dimerize on DNA to form joined MRN-MRN oligomers required for DNA double-strand break repair. The MRN complexes dimerize on DNA to form joined MRN-MRN oligomers required for DNA double-strand break repair. As part of the MRN complex, interacts with MCM9; the interaction recruits the complex to DNA repair sites. Component of the BASC complex, at least composed of BRCA1, MSH2, MSH6, MLH1, ATM, BLM, RAD50, MRE11 and NBN. Interacts with histone H2AX; this requires phosphorylation of H2AX on 'Ser-139' and promotes NBN recruitment to DNA damage sites. Interacts with (phosphorylated) MDC1; promoting NBN recruitment to DNA damage sites. Interacts with (phosphorylated) RAD17; promoting NBN recruitment to DNA damage sites. Interacts (via FxF/Y motif) with ATM. Interacts with HJURP. Interacts with INTS3. Interacts with KPNA2. Interacts with TERF2; interaction is disrupted upon NBN phosphorylation by CDK2. Interacts with (phosphorylated) RBBP8/CtIP; the interaction links the role of the MRN complex in DNA double-strand break sensing to resection. Interacts with SP100; recruits NBN to PML bodies. Interacts with ATF2. Interacts with MTOR, MAPKAP1 isoform 2 and RICTOR; indicative for an association with the mTORC2 complex. Interacts with MRNIP. Interacts with UFL1; promoting UFL1 recruitment to double-strand breaks following DNA damage. Interacts with CYREN (via XLF motif). In terms of processing, phosphorylated by ATM in response of ionizing radiation, and such phosphorylation is responsible intra-S phase checkpoint control and telomere maintenance. Phosphorylated at Ser-432 by CDK2 in S/G2 phases abolishes interaction with TERF2, enabling DCLRE1B/Apollo recruitment to telomeres. Phosphorylation at Ser-432 in response to dysfunctional telomeres promotes non-homologous end joining repair at telomeres, while dephosphorylation by PPP1CA promotes microhomology-mediated end-joining (MMEJ) repair. Post-translationally, ubiquitinated at Lys-435 via 'Lys-6'-linked ubiquitin chains by RNF8, promoting NBN recruitment to DNA double-strand breaks (DSBs). Ubiquitinated at Lys-686 and Lys-689 via 'Lys-63'-linked ubiquitin chains by PELI1: ubiquitination takes place following PELI1 phosphorylation and promotes ATM activation and DNA repair. Ubiquitinated at Lys-735 via 'Lys-63'-linked ubiquitin chains by the SCF(SKP2) complex: ubiquitination takes place following SKP2 phosphorylation and promotes ATM activation and DNA repair. Lactylation at Lys-388 by KAT5 in response to DNA damage promotes recruitment of the MRN complex to DNA damage sites. Delactylated by HDAC3.

It is found in the nucleus. The protein localises to the chromosome. The protein resides in the PML body. Its subcellular location is the telomere. Component of the MRN complex, which plays a central role in double-strand break (DSB) repair, DNA recombination, maintenance of telomere integrity and meiosis. The MRN complex is involved in the repair of DNA double-strand breaks (DSBs) via homologous recombination (HR), an error-free mechanism which primarily occurs during S and G2 phases. The complex (1) mediates the end resection of damaged DNA, which generates proper single-stranded DNA, a key initial steps in HR, and is (2) required for the recruitment of other repair factors and efficient activation of ATM and ATR upon DNA damage. The MRN complex possesses single-strand endonuclease activity and double-strand-specific 3'-5' exonuclease activity, which are provided by MRE11, to initiate end resection, which is required for single-strand invasion and recombination. Within the MRN complex, NBN acts as a protein-protein adapter, which specifically recognizes and binds phosphorylated proteins, promoting their recruitment to DNA damage sites. Recruits MRE11 and RAD50 components of the MRN complex to DSBs in response to DNA damage. Promotes the recruitment of PI3/PI4-kinase family members ATM, ATR, and probably DNA-PKcs to the DNA damage sites, activating their functions. Mediates the recruitment of phosphorylated RBBP8/CtIP to DSBs, leading to cooperation between the MRN complex and RBBP8/CtIP to initiate end resection. RBBP8/CtIP specifically promotes the endonuclease activity of the MRN complex to clear DNA ends containing protein adducts. The MRN complex is also required for the processing of R-loops. NBN also functions in telomere length maintenance via its interaction with TERF2: interaction with TERF2 during G1 phase preventing recruitment of DCLRE1B/Apollo to telomeres. NBN also promotes DNA repair choice at dysfunctional telomeres: NBN phosphorylation by CK2 promotes non-homologous end joining repair at telomeres, while unphosphorylated NBN promotes microhomology-mediated end-joining (MMEJ) repair. Enhances AKT1 phosphorylation possibly by association with the mTORC2 complex. This Pongo abelii (Sumatran orangutan) protein is Nibrin (NBN).